The following is a 221-amino-acid chain: Flagellar L-ring protein 2 (221 aa).

The N-terminal stretch at 1-16 (MKRFLILTPMVLALCG) is a signal peptide. C17 carries the N-palmitoyl cysteine lipid modification. The S-diacylglycerol cysteine moiety is linked to residue C17.

Belongs to the FlgH family. The basal body constitutes a major portion of the flagellar organelle and consists of four rings (L,P,S, and M) mounted on a central rod.

The protein localises to the cell outer membrane. It is found in the bacterial flagellum basal body. In terms of biological role, assembles around the rod to form the L-ring and probably protects the motor/basal body from shearing forces during rotation. The chain is Flagellar L-ring protein 2 from Yersinia pseudotuberculosis serotype I (strain IP32953).